Reading from the N-terminus, the 1353-residue chain is DNA-directed RNA polymerase subunit beta' (1353 aa).

Residues 1–117 are unknown; that stretch reads MSDNRLFTSV…AFQKLNDLFK (117 aa). Positions 118-1353 are DNA-directed RNA polymerase subunit beta'; the sequence is LYNHFPSISS…SELAEKTNQN (1236 aa). Residues Cys189, Cys191, Cys203, and Cys206 each contribute to the Zn(2+) site. Asp578, Asp580, and Asp582 together coordinate Mg(2+).

This sequence belongs to the RNA polymerase beta' chain family. The RNAP catalytic core consists of 2 alpha, 1 beta, 1 beta' and 1 omega subunit. When a sigma factor is associated with the core the holoenzyme is formed, which can initiate transcription. Requires Mg(2+) as cofactor. Zn(2+) is required as a cofactor.

It carries out the reaction RNA(n) + a ribonucleoside 5'-triphosphate = RNA(n+1) + diphosphate. Functionally, DNA-dependent RNA polymerase catalyzes the transcription of DNA into RNA using the four ribonucleoside triphosphates as substrates. This is DNA-directed RNA polymerase subunit beta' from Onion yellows phytoplasma (strain OY-M).